Reading from the N-terminus, the 195-residue chain is Probable GTP-binding protein EngB (195 aa).

One can recognise an EngB-type G domain in the interval 22–195 (GLPEIALAGR…WNAILAKINK (174 aa)). Residues 30 to 37 (GRSNVGKS), 57 to 61 (GKTQT), 75 to 78 (DVPG), 142 to 145 (TKAD), and 174 to 176 (FSS) each bind GTP. Positions 37 and 59 each coordinate Mg(2+).

It belongs to the TRAFAC class TrmE-Era-EngA-EngB-Septin-like GTPase superfamily. EngB GTPase family. The cofactor is Mg(2+).

In terms of biological role, necessary for normal cell division and for the maintenance of normal septation. This is Probable GTP-binding protein EngB from Bacillus pumilus (strain SAFR-032).